We begin with the raw amino-acid sequence, 426 residues long: 3-phosphoshikimate 1-carboxyvinyltransferase (426 aa).

3-phosphoshikimate-binding residues include lysine 22, serine 23, and arginine 27. Phosphoenolpyruvate is bound at residue lysine 22. The phosphoenolpyruvate site is built by glycine 96 and arginine 124. 7 residues coordinate 3-phosphoshikimate: serine 170, serine 171, glutamine 172, serine 198, aspartate 314, asparagine 337, and lysine 341. Glutamine 172 is a binding site for phosphoenolpyruvate. The active-site Proton acceptor is the aspartate 314. Phosphoenolpyruvate-binding residues include arginine 345, arginine 387, and lysine 412.

The protein belongs to the EPSP synthase family. As to quaternary structure, monomer.

It localises to the cytoplasm. It carries out the reaction 3-phosphoshikimate + phosphoenolpyruvate = 5-O-(1-carboxyvinyl)-3-phosphoshikimate + phosphate. It functions in the pathway metabolic intermediate biosynthesis; chorismate biosynthesis; chorismate from D-erythrose 4-phosphate and phosphoenolpyruvate: step 6/7. Catalyzes the transfer of the enolpyruvyl moiety of phosphoenolpyruvate (PEP) to the 5-hydroxyl of shikimate-3-phosphate (S3P) to produce enolpyruvyl shikimate-3-phosphate and inorganic phosphate. The chain is 3-phosphoshikimate 1-carboxyvinyltransferase from Vibrio cholerae serotype O1 (strain ATCC 39541 / Classical Ogawa 395 / O395).